A 368-amino-acid polypeptide reads, in one-letter code: MIRVYTQRQQGKNWLQRYQGYKPIFGCILGFTDTGLIPGISAAGATPQDRQYTCLADIEFLYNGLQLQPQYPLPPLEAGASPVLITKAIIDTLNIPLYLFNAGLYHKPTVPTIDLGGAPARCLTSGHALDLATIQHLLEVGSYWGRKLADEAKDSYVILGECVVGGTTTALAVLLGLGIGAIGKVNSSHPQCNHDQKLAVVHQGLQEAGFHSALPVSEPLKLVAAVGDPMQIVVAGMGMAASLKVGVMLAGGTQMLAVYALMQVLAEKLSLLWRPENIVVGTTRWVAEDPTGDTVGLAQEIGCVPLMATQLHFDESCYPQLQAYERGYVKEGVGCGGCAITAHLYRNWNQTQLLKAVEDLFASFIFLE.

Belongs to the UPF0284 family.

The protein is UPF0284 protein Tery_1555 of Trichodesmium erythraeum (strain IMS101).